Here is a 52-residue protein sequence, read N- to C-terminus: MDLIRILIAILLPPLGVFLQVGFGGAFWLNILLTLLGYIPGIVHAVYIIAKR.

Transmembrane regions (helical) follow at residues 6–26 and 29–49; these read ILIAILLPPLGVFLQVGFGGA and LNILLTLLGYIPGIVHAVYII.

The protein belongs to the UPF0057 (PMP3) family.

It is found in the cell membrane. This is UPF0057 membrane protein PA0567 from Pseudomonas aeruginosa (strain ATCC 15692 / DSM 22644 / CIP 104116 / JCM 14847 / LMG 12228 / 1C / PRS 101 / PAO1).